An 881-amino-acid polypeptide reads, in one-letter code: Leucine--tRNA ligase (881 aa).

The 'HIGH' region signature appears at proline 48–histidine 58. A 'KMSKS' region motif is present at residues lysine 638–serine 642. Position 641 (lysine 641) interacts with ATP.

This sequence belongs to the class-I aminoacyl-tRNA synthetase family.

Its subcellular location is the cytoplasm. The enzyme catalyses tRNA(Leu) + L-leucine + ATP = L-leucyl-tRNA(Leu) + AMP + diphosphate. This is Leucine--tRNA ligase from Janthinobacterium sp. (strain Marseille) (Minibacterium massiliensis).